Consider the following 345-residue polypeptide: Nicotinate-nucleotide--dimethylbenzimidazole phosphoribosyltransferase (345 aa).

The active-site Proton acceptor is Glu-311.

The protein belongs to the CobT family.

It carries out the reaction 5,6-dimethylbenzimidazole + nicotinate beta-D-ribonucleotide = alpha-ribazole 5'-phosphate + nicotinate + H(+). It participates in nucleoside biosynthesis; alpha-ribazole biosynthesis; alpha-ribazole from 5,6-dimethylbenzimidazole: step 1/2. Catalyzes the synthesis of alpha-ribazole-5'-phosphate from nicotinate mononucleotide (NAMN) and 5,6-dimethylbenzimidazole (DMB). The polypeptide is Nicotinate-nucleotide--dimethylbenzimidazole phosphoribosyltransferase (Janthinobacterium sp. (strain Marseille) (Minibacterium massiliensis)).